The following is a 399-amino-acid chain: ATP-dependent RNA helicase fal1 (399 aa).

A Q motif motif is present at residues 25-53 (PTFQDMHLKENLLRGIYAYGYESPSAVQS). The Helicase ATP-binding domain occupies 56–226 (IVQICKGRDT…TKFMTDPVRI (171 aa)). 69-76 (AQSGTGKT) is a binding site for ATP. A DEAD box motif is present at residues 174-177 (DEAD). A Helicase C-terminal domain is found at 237–398 (GLKQYFIAVE…EMPMNVADLL (162 aa)).

Belongs to the DEAD box helicase family. DDX48/FAL1 subfamily.

It localises to the nucleus. The protein localises to the nucleolus. It catalyses the reaction ATP + H2O = ADP + phosphate + H(+). In terms of biological role, ATP-dependent RNA helicase involved in 40S ribosomal subunit biogenesis. Required for the processing and cleavage of 35S pre-rRNA at sites A0, A1, and A2, leading to mature 18S rRNA. This is ATP-dependent RNA helicase fal1 (fal1) from Botryotinia fuckeliana (strain B05.10) (Noble rot fungus).